The primary structure comprises 92 residues: Putative septation protein SpoVG (92 aa).

This sequence belongs to the SpoVG family.

Could be involved in septation. The sequence is that of Putative septation protein SpoVG from Thermoanaerobacter sp. (strain X514).